We begin with the raw amino-acid sequence, 95 residues long: Aspartyl/glutamyl-tRNA(Asn/Gln) amidotransferase subunit C (95 aa).

It belongs to the GatC family. As to quaternary structure, heterotrimer of A, B and C subunits.

The enzyme catalyses L-glutamyl-tRNA(Gln) + L-glutamine + ATP + H2O = L-glutaminyl-tRNA(Gln) + L-glutamate + ADP + phosphate + H(+). The catalysed reaction is L-aspartyl-tRNA(Asn) + L-glutamine + ATP + H2O = L-asparaginyl-tRNA(Asn) + L-glutamate + ADP + phosphate + 2 H(+). Its function is as follows. Allows the formation of correctly charged Asn-tRNA(Asn) or Gln-tRNA(Gln) through the transamidation of misacylated Asp-tRNA(Asn) or Glu-tRNA(Gln) in organisms which lack either or both of asparaginyl-tRNA or glutaminyl-tRNA synthetases. The reaction takes place in the presence of glutamine and ATP through an activated phospho-Asp-tRNA(Asn) or phospho-Glu-tRNA(Gln). The polypeptide is Aspartyl/glutamyl-tRNA(Asn/Gln) amidotransferase subunit C (Pseudomonas putida (strain ATCC 700007 / DSM 6899 / JCM 31910 / BCRC 17059 / LMG 24140 / F1)).